The chain runs to 553 residues: Replication factor C large subunit (553 aa).

Residue 50–57 (GGPGVGKT) coordinates ATP. A disordered region spans residues 438–553 (GKRPGKPEAG…SKKQRTLFDF (116 aa)). Over residues 442-451 (GKPEAGEPRE) the composition is skewed to basic and acidic residues. The segment covering 503–513 (EAPMAAAMPAA) has biased composition (low complexity). A compositionally biased stretch (basic and acidic residues) spans 532–553 (EPEKPPAAEDKCSKKQRTLFDF).

Belongs to the activator 1 small subunits family. RfcL subfamily. In terms of assembly, heteromultimer composed of small subunits (RfcS) and large subunits (RfcL).

Functionally, part of the RFC clamp loader complex which loads the PCNA sliding clamp onto DNA. This Methanocella arvoryzae (strain DSM 22066 / NBRC 105507 / MRE50) protein is Replication factor C large subunit.